The chain runs to 1646 residues: Monensin-resistant homolog 2 (1646 aa).

It belongs to the MON2 family.

The protein localises to the golgi apparatus. Its function is as follows. May be required for traffic between late Golgi and early endosomes. The chain is Monensin-resistant homolog 2 (mon-2) from Caenorhabditis elegans.